A 158-amino-acid chain; its full sequence is Cytochrome b562 (158 aa).

The next 4 membrane-spanning stretches (helical) occupy residues 12–32, 46–66, 87–107, and 121–141; these read ITLH…GETM, AGVG…LTLV, VAAG…ALGM, and HVLA…SALF. Residues H15 and H53 each coordinate heme b. H121 and H135 together coordinate heme b.

The protein belongs to the cytochrome b561 family. Homodimer. The cofactor is heme b.

It is found in the cell membrane. Cytochrome b562 is an integral component of the cytochrome b-c1 complex in the cyclic electron transfer system of photosynthetic bacteria. The polypeptide is Cytochrome b562 (Cereibacter sphaeroides (strain ATCC 17023 / DSM 158 / JCM 6121 / CCUG 31486 / LMG 2827 / NBRC 12203 / NCIMB 8253 / ATH 2.4.1.) (Rhodobacter sphaeroides)).